We begin with the raw amino-acid sequence, 347 residues long: Ryncolin-2 (347 aa).

A signal peptide spans 1–19 (MKPWAAFHLIFLVASSLEG). Residues 49-115 (LQSQPGIPGI…DKGDKGDKGD (67 aa)) are disordered. The Collagen-like domain maps to 57–114 (GIPGVPGINGSEGLKGDPGPQGLPGETGFDGIPGVAGPKGDKGDQGDKGDKGDKGDKG). The segment covering 95–115 (KGDKGDQGDKGDKGDKGDKGD) has biased composition (basic and acidic residues). Residues 121 to 341 (DCPPTDVEVR…YADMKIRPQQ (221 aa)) enclose the Fibrinogen C-terminal domain. 2 disulfide bridges follow: cysteine 132–cysteine 160 and cysteine 284–cysteine 297.

It belongs to the ficolin lectin family. Veficolin subfamily. Hydroxylated, possibly at Pro-74 and Pro-94. Expressed by the venom duct.

It is found in the secreted. Functionally, initiates complement activation and/or interferes in platelet aggregation and/or blood coagulation. This chain is Ryncolin-2, found in Cerberus rynchops (Dog-faced water snake).